Consider the following 248-residue polypeptide: NADP-dependent 3-hydroxy acid dehydrogenase YdfG (248 aa).

NADP(+)-binding positions include 7–12 (GATAGF), 32–33 (RR), 54–55 (DV), and N81. Substrate is bound at residue S134. Residues Y147, K151, and 177–185 (PGLVGGTEF) each bind NADP(+). Y147 acts as the Proton acceptor in catalysis.

The protein belongs to the short-chain dehydrogenases/reductases (SDR) family. As to quaternary structure, homotetramer.

It carries out the reaction 3-hydroxypropanoate + NADP(+) = 3-oxopropanoate + NADPH + H(+). The enzyme catalyses L-allo-threonine + NADP(+) = aminoacetone + CO2 + NADPH. NADP-dependent dehydrogenase with broad substrate specificity acting on 3-hydroxy acids. Catalyzes the NADP-dependent oxidation of L-allo-threonine to L-2-amino-3-keto-butyrate, which is spontaneously decarboxylated into aminoacetone. Also acts on D-threonine, L-serine, D-serine, D-3-hydroxyisobutyrate, L-3-hydroxyisobutyrate, D-glycerate and L-glycerate. Able to catalyze the reduction of the malonic semialdehyde to 3-hydroxypropionic acid. YdfG is apparently supplementing RutE, the presumed malonic semialdehyde reductase involved in pyrimidine degradation since both are able to detoxify malonic semialdehyde. The sequence is that of NADP-dependent 3-hydroxy acid dehydrogenase YdfG from Shigella flexneri.